The chain runs to 305 residues: MMSNYNKNNLFAKLAYGDLSEVQALLKSGVNIDEHKNERGETALYNTLFTGYMDRAAFLLKHKASPNIPDNSGQTILYLLVMNNSIDKMKFLFENTTNIDLEIKSFCGHSPLHAATFNENIEAMELLLKKGADINSKDSFGASALHGTIYNNKLKAAELLLNHGADVNAKDNYEDTILHNIIGTNNIEAAKFLLQNGADVNIENNNNFTPLDRAILGQHKELAELFLKSGATIKIGNTMDFKILSEKLLDMNIDKELVFKSLLISNIDDQTKFQLLSDFNFKADIHHKIGLLLSLTLNCIFSAYK.

ANK repeat units lie at residues 5–34 (YNKNNLFAKLAYGDLSEVQALLKSGVNIDE), 39–68 (RGETALYNTLFTGYMDRAAFLLKHKASPNI), 72–101 (SGQTILYLLVMNNSIDKMKFLFENTTNIDL), 107–136 (CGHSPLHAATFNENIEAMELLLKKGADINS), 140–169 (FGASALHGTIYNNKLKAAELLLNHGADVNA), 173–202 (YEDTILHNIIGTNNIEAAKFLLQNGADVNI), and 206–235 (NNFTPLDRAILGQHKELAELFLKSGATIKI).

In Rickettsia felis (strain ATCC VR-1525 / URRWXCal2) (Rickettsia azadi), this protein is Putative ankyrin repeat protein RF_0580.